The sequence spans 671 residues: MSEESRKHDIEEQHIEKWIPLKERKLNQIKSKLNNLKQQQPQQHSQQQENEQNNATATNTNITNTTTTTTTTTTTTTSSNNDNNFEDEKKPIYQQSQSLLDQKFEMIKKQENKTQRELQQGGTIIENDVNSSNNNNNNGEENKIKEEKRLDMEESDILKSLKTFKPLVSVKDRAKDVIYTDSIKTNWRAPRYILERDEKDHQKVRDQLNIITDGEDIPPPITTFKEMKIPKPVIDVLLEKGIKKPSPIQVQGLPVILSGRDMIGIAYTGSGKTLVFTLPMVLFALEEECKLPIIQGEGPFGLILCPSRELARQTYDLVNSFTNALHKNGGHPQLRTLLAIGGIDLREQEHIFKKGVHMIIATPGRLLDLLNKKKINFKLCKYLGLDEADRLIDLGFEDDIRSVLDNFTNQRQTLLFSATMPKKIQEFARSALVLPVEVNVGRAGAANLNVTQEVEFVKPEAKIVYLLECLQKTPPPVLIFCENKKDVDDIYEYLLLKQVEAVSIHGDKSQDERESAIKAFREGKKDVLVATDVASKGLDFPEIQHVINFDMPREIENYIHRIGRTGRRGNKGVATTFINKNNTESLLLDLKYLLIEAKQKVPPALLEIPDDNQYLQKLQDRNGNTGGGADDDDTKPCEYCDGRGHRLVNCPKLKKQAGPKRDFFGSGGGDW.

Coiled-coil stretches lie at residues I19 to Q43 and L100 to E154. Low complexity-rich tracts occupy residues L33–N83 and I125–G139. Disordered stretches follow at residues L33–E88 and I125–K148. Residues T222–V250 carry the Q motif motif. The 186-residue stretch at L253–V438 folds into the Helicase ATP-binding domain. An ATP-binding site is contributed by A266–T273. The DEAD box signature appears at D386 to D389. The Helicase C-terminal domain occupies N449–P609. Positions K617–P636 are disordered. A CCHC-type zinc finger spans residues K635–K652.

The protein belongs to the DEAD box helicase family. DDX41 subfamily.

It localises to the nucleus. The enzyme catalyses ATP + H2O = ADP + phosphate + H(+). In Dictyostelium discoideum (Social amoeba), this protein is Probable ATP-dependent RNA helicase ddx41 (ddx41).